The chain runs to 596 residues: uncharacterized protein (596 aa).

Residues 7 to 26 form a helical membrane-spanning segment; the sequence is FWPILLGFTVLVAAGLYYVV.

It localises to the membrane. This is an uncharacterized protein from Sinorhizobium fredii (strain NBRC 101917 / NGR234).